The chain runs to 54 residues: UPF0391 membrane protein Rmet_0093 (54 aa).

2 helical membrane-spanning segments follow: residues 5–25 and 30–50; these read ALVF…GIAA and IAKI…VMGL.

Belongs to the UPF0391 family.

It is found in the cell membrane. The chain is UPF0391 membrane protein Rmet_0093 from Cupriavidus metallidurans (strain ATCC 43123 / DSM 2839 / NBRC 102507 / CH34) (Ralstonia metallidurans).